The sequence spans 345 residues: Skn-1 dependent zygotic transcript 15 protein (345 aa).

In terms of domain architecture, F-box spans Ala-11 to Val-55.

Its function is as follows. May have a role in embryogenesis. This Caenorhabditis elegans protein is Skn-1 dependent zygotic transcript 15 protein (sdz-15).